Reading from the N-terminus, the 307-residue chain is Aspartate carbamoyltransferase catalytic subunit (307 aa).

Carbamoyl phosphate-binding residues include Arg-54 and Thr-55. Position 83 (Lys-83) interacts with L-aspartate. Positions 104, 132, and 135 each coordinate carbamoyl phosphate. Arg-165 and Arg-228 together coordinate L-aspartate. Carbamoyl phosphate contacts are provided by Leu-267 and Pro-268.

This sequence belongs to the aspartate/ornithine carbamoyltransferase superfamily. ATCase family. As to quaternary structure, heterododecamer (2C3:3R2) of six catalytic PyrB chains organized as two trimers (C3), and six regulatory PyrI chains organized as three dimers (R2).

It carries out the reaction carbamoyl phosphate + L-aspartate = N-carbamoyl-L-aspartate + phosphate + H(+). The protein operates within pyrimidine metabolism; UMP biosynthesis via de novo pathway; (S)-dihydroorotate from bicarbonate: step 2/3. Functionally, catalyzes the condensation of carbamoyl phosphate and aspartate to form carbamoyl aspartate and inorganic phosphate, the committed step in the de novo pyrimidine nucleotide biosynthesis pathway. The chain is Aspartate carbamoyltransferase catalytic subunit from Clostridium acetobutylicum (strain ATCC 824 / DSM 792 / JCM 1419 / IAM 19013 / LMG 5710 / NBRC 13948 / NRRL B-527 / VKM B-1787 / 2291 / W).